Here is a 468-residue protein sequence, read N- to C-terminus: Cysteine--tRNA ligase (468 aa).

Cys29 contributes to the Zn(2+) binding site. The 'HIGH' region signature appears at 31-41; that stretch reads PTVYNYIHIGN. Zn(2+) is bound by residues Cys209, His234, and Glu238. Positions 266-270 match the 'KMSKS' region motif; that stretch reads KMSKS. Position 269 (Lys269) interacts with ATP.

Belongs to the class-I aminoacyl-tRNA synthetase family. In terms of assembly, monomer. It depends on Zn(2+) as a cofactor.

It localises to the cytoplasm. The catalysed reaction is tRNA(Cys) + L-cysteine + ATP = L-cysteinyl-tRNA(Cys) + AMP + diphosphate. The protein is Cysteine--tRNA ligase of Brevibacillus brevis (strain 47 / JCM 6285 / NBRC 100599).